An 865-amino-acid polypeptide reads, in one-letter code: Rifampicin phosphotransferase (865 aa).

The interval 2-314 (SGRLVVDLQD…FHIVQSRPIT (313 aa)) is ATP-binding. Positions 23, 117, 132, 136, 183, 297, 309, and 311 each coordinate ATP. The segment at 327–752 (FRVYLSVGHQ…TSEGVALSGA (426 aa)) is rifampicin-binding. The segment at 403–430 (ENGEFEPTPAETDGGAPPAGDGAEPDEA) is disordered. Residues 409–424 (PTPAETDGGAPPAGDG) are compositionally biased toward low complexity. The segment at 765-863 (GLAVSAGTVE…VHGTEGYIEL (99 aa)) is swivel phosphohistidine. His-823 functions as the Tele-phosphohistidine intermediate in the catalytic mechanism.

This sequence belongs to the rifampicin phosphotransferase family.

It carries out the reaction rifampicin + ATP + H2O = 21-phosphorifampicin + AMP + phosphate + 2 H(+). Its function is as follows. Catalyzes the phosphorylation of rifampicin, also known as rifampin (RIF), leading to its inactivation. Confers high level resistance to a variety of clinically used rifamycin antibiotics. This chain is Rifampicin phosphotransferase, found in Streptomyces sp.